Consider the following 765-residue polypeptide: Protein O-mannosyl-transferase 2 (765 aa).

The tract at residues 1–31 (MAASVVKTPKCPRRGSVKDVAQNAPRTAPTS) is disordered. A helical membrane pass occupies residues 35-55 (ANWNWWLLLATVFLVTFATRF). Asn80, Asn106, and Asn119 each carry an N-linked (GlcNAc...) asparagine glycan. 5 helical membrane-spanning segments follow: residues 128-148 (YFCT…VYDL), 175-195 (ILLD…MVKV), 206-226 (GLRW…TISV), 228-248 (FVGL…LWLI), and 268-288 (ITLI…HLSV). Asn290 and Asn314 each carry an N-linked (GlcNAc...) asparagine glycan. 3 MIR domains span residues 318–374 (PRDV…IRPH), 384–440 (VQIL…VLIV), and 445–501 (NETV…VEDN). N-linked (GlcNAc...) asparagine glycosylation is present at Asn445. A run of 4 helical transmembrane segments spans residues 566–586 (IYLL…ALFV), 667–687 (LFLG…VLYF), 689–709 (HYFP…NYIL), and 719–739 (VILG…SPLA). Asn751 carries an N-linked (GlcNAc...) asparagine glycan.

The protein belongs to the glycosyltransferase 39 family. As to quaternary structure, interacts with Rt/POMT1. At the cellular blastoderm stage, expression accumulates in the ventrally located mesoderm primordium. At germ band extension, mesoderm expression is seen as stripes of strong expression. A very strong signal is also detected in the invaginating gut. As the germ band retracts, mesodermal expression decays and becomes restricted to somatic muscle precursors.

The protein resides in the endoplasmic reticulum membrane. It catalyses the reaction a di-trans,poly-cis-dolichyl beta-D-mannosyl phosphate + L-seryl-[protein] = 3-O-(alpha-D-mannosyl)-L-seryl-[protein] + a di-trans,poly-cis-dolichyl phosphate + H(+). The catalysed reaction is a di-trans,poly-cis-dolichyl beta-D-mannosyl phosphate + L-threonyl-[protein] = 3-O-(alpha-D-mannosyl)-L-threonyl-[protein] + a di-trans,poly-cis-dolichyl phosphate + H(+). It participates in protein modification; protein glycosylation. In terms of biological role, rt/POMT1 and tw/POMT2 function as a protein O-mannosyltransferase in association with each other to generate and maintain normal muscle development. This chain is Protein O-mannosyl-transferase 2 (tw), found in Drosophila melanogaster (Fruit fly).